Consider the following 124-residue polypeptide: Membrane magnesium transporter 2 (124 aa).

Position 1 (methionine 1) is a topological domain, cytoplasmic. Residues 2 to 22 traverse the membrane as a helical segment; that stretch reads VAWLWKVLVGVGLSALAHAAF. Over 23–44 the chain is Lumenal; that stretch reads SAAQHRSHTRLAEMKYEPLPTD. A helical transmembrane segment spans residues 45-65; the sequence is IVLQTLLAFALTCYGVVHTAG. The Cytoplasmic segment spans residues 66–124; the sequence is DFRDRDATSELKNVTFDTLRNRPSFYVFQHSGSSLLQPSDTTRSSNLNVPSSDDIRLKF.

Belongs to the membrane magnesium transporter (TC 1.A.67) family.

It localises to the golgi apparatus membrane. The protein localises to the early endosome membrane. Its function is as follows. Mediates Mg(2+) transport. The chain is Membrane magnesium transporter 2 from Rattus norvegicus (Rat).